The primary structure comprises 101 residues: Small ribosomal subunit protein uS10 (101 aa).

The protein belongs to the universal ribosomal protein uS10 family. Part of the 30S ribosomal subunit.

Functionally, involved in the binding of tRNA to the ribosomes. The polypeptide is Small ribosomal subunit protein uS10 (Mycobacteroides abscessus (strain ATCC 19977 / DSM 44196 / CCUG 20993 / CIP 104536 / JCM 13569 / NCTC 13031 / TMC 1543 / L948) (Mycobacterium abscessus)).